Reading from the N-terminus, the 769-residue chain is 5-methyltetrahydropteroyltriglutamate--homocysteine methyltransferase (769 aa).

5-methyltetrahydropteroyltri-L-glutamate contacts are provided by residues R16–K19 and K118. L-homocysteine contacts are provided by residues I440–S442 and E493. L-methionine-binding positions include I440–S442 and E493. 5-methyltetrahydropteroyltri-L-glutamate is bound by residues R524–C525 and W570. D608 is an L-homocysteine binding site. D608 contacts L-methionine. 5-methyltetrahydropteroyltri-L-glutamate is bound at residue E614. The Zn(2+) site is built by H650, C652, and E674. Residue H706 is the Proton donor of the active site. C738 contacts Zn(2+).

This sequence belongs to the vitamin-B12 independent methionine synthase family. The cofactor is Zn(2+).

The catalysed reaction is 5-methyltetrahydropteroyltri-L-glutamate + L-homocysteine = tetrahydropteroyltri-L-glutamate + L-methionine. It participates in amino-acid biosynthesis; L-methionine biosynthesis via de novo pathway; L-methionine from L-homocysteine (MetE route): step 1/1. Its function is as follows. Catalyzes the transfer of a methyl group from 5-methyltetrahydrofolate to homocysteine resulting in methionine formation. In Acidiphilium cryptum (strain JF-5), this protein is 5-methyltetrahydropteroyltriglutamate--homocysteine methyltransferase.